The following is a 155-amino-acid chain: Phytohormone-binding protein CSBP (155 aa).

Trans-zeatin contacts are provided by residues L22, Q67, E69, and 139–142 (TLMY). Residue Q67 coordinates gibberellin A3. A gibberellin A3-binding site is contributed by T139.

This sequence belongs to the BetVI family. As to quaternary structure, monomer.

Binds the cytokinin trans-zeatin in vitro. Binds gibberellin A3 (GA3) in vitro. The polypeptide is Phytohormone-binding protein CSBP (Vigna radiata var. radiata (Mung bean)).